Reading from the N-terminus, the 870-residue chain is MDLQRHPIPFAWLDRDKVERLTDFLSNLERLDNVDLREHPHVTNSCVVREGDDVDDLKTLYNLLVLWLMYHYVLSKRKPDYNAIWQDITKLQSVVNEYLNSKGLNKGIFENMFTNKEKFESQFSDINRALLRLGNFIKWGSNVAIDTPYVNLTAEDSSEIENNLQDAEKNMLWYTVYNINDPWDENGYLITSINKLIYLGKLFLALTQSWSKLEKVAMSQIVITQNHLSGHLRRHDNFNIVYSHRVLQTPLTGQRVESFLKIITSDYDIIKSSLESHSASKAFSMSEIGPNSLMDFVPLRGDIHSNLTLPSMSIDTKKSSLDPARLKKSNSRSLDSFLRMQRQPKFLELDSVDNAGEKILLKEATLGGENVKATTPASSVSLMSGVESPSSFTSTNLDLPLSSFTSTNLDLRDKSHGNYKIGPSGILDFNVKFPPNAQLNTNGVDLLQDKTSIGSPSSGITDVVNGFANLNLHQNKSNVSPPWSRNTAANADFLDPVHRFVPEQTGTPFVLNNSDVAGSEAKHTTYSTETGVSPRNVFLIKDLRGKDGFRKQKQSDIPKSLTKERNDKAIMHSREVTGDSGDATETVGARNSPALRKIKQANDFFAGLNKKNDRDVLRGGKGNSKDLHSGGNAKKKEMSGKFNDDKEMTRNGQEPSRSLMGDARNAGDEQYIQAGLGQRVNNLLSQFTNLISLGEKGIEDILQNQRGTELKLATENKSGRESEEANVEKILEVSNPQDMFKNFRLQNDLDSVQSPFRLPDADLSRELDSASFKDALDLKLPGNGEREIDLALEKVKVGETETSDLKVGQDESFVPAQLMKVETPEEKDDIIEQMVLRIRQDGETDENTVSGPGVAESLDIEAKGESAIAS.

The span at N612–T649 shows a compositional bias: basic and acidic residues. Disordered regions lie at residues N612 to D662 and Q840 to S870.

It belongs to the herpesviridae large structural phosphoprotein family. Post-translationally, phosphorylated at multiple sites.

The protein resides in the virion tegument. The polypeptide is Large structural phosphoprotein (U11) (Human herpesvirus 6A (strain Uganda-1102) (HHV-6 variant A)).